The sequence spans 156 residues: Small ribosomal subunit protein uS7 (156 aa).

The protein belongs to the universal ribosomal protein uS7 family. As to quaternary structure, part of the 30S ribosomal subunit. Contacts proteins S9 and S11.

One of the primary rRNA binding proteins, it binds directly to 16S rRNA where it nucleates assembly of the head domain of the 30S subunit. Is located at the subunit interface close to the decoding center, probably blocks exit of the E-site tRNA. This is Small ribosomal subunit protein uS7 from Geobacillus thermodenitrificans (strain NG80-2).